The primary structure comprises 359 residues: Transaldolase (359 aa).

The Schiff-base intermediate with substrate role is filled by Lys-139.

Belongs to the transaldolase family. Type 2 subfamily.

Its subcellular location is the cytoplasm. The catalysed reaction is D-sedoheptulose 7-phosphate + D-glyceraldehyde 3-phosphate = D-erythrose 4-phosphate + beta-D-fructose 6-phosphate. Its pathway is carbohydrate degradation; pentose phosphate pathway; D-glyceraldehyde 3-phosphate and beta-D-fructose 6-phosphate from D-ribose 5-phosphate and D-xylulose 5-phosphate (non-oxidative stage): step 2/3. Functionally, transaldolase is important for the balance of metabolites in the pentose-phosphate pathway. This is Transaldolase from Thiobacillus denitrificans (strain ATCC 25259 / T1).